The primary structure comprises 252 residues: Small ribosomal subunit protein eS4 (252 aa).

Residues 43–105 (FPLLIIVRDI…TGETYRVIPV (63 aa)) form the S4 RNA-binding domain.

This sequence belongs to the eukaryotic ribosomal protein eS4 family.

This chain is Small ribosomal subunit protein eS4, found in Staphylothermus marinus (strain ATCC 43588 / DSM 3639 / JCM 9404 / F1).